A 146-amino-acid polypeptide reads, in one-letter code: Putative pre-16S rRNA nuclease (146 aa).

It belongs to the YqgF nuclease family.

The protein resides in the cytoplasm. Functionally, could be a nuclease involved in processing of the 5'-end of pre-16S rRNA. This chain is Putative pre-16S rRNA nuclease, found in Methylobacillus flagellatus (strain ATCC 51484 / DSM 6875 / VKM B-1610 / KT).